The chain runs to 345 residues: L-threonine 3-dehydrogenase (345 aa).

Cys38 serves as a coordination point for Zn(2+). Residues Thr40 and His43 each act as charge relay system in the active site. 6 residues coordinate Zn(2+): His63, Glu64, Cys93, Cys96, Cys99, and Cys107. NAD(+)-binding positions include Ile176, Asp196, Arg201, 263–265 (LGT), and 287–288 (VT).

It belongs to the zinc-containing alcohol dehydrogenase family. As to quaternary structure, homotetramer. Zn(2+) serves as cofactor.

Its subcellular location is the cytoplasm. It catalyses the reaction L-threonine + NAD(+) = (2S)-2-amino-3-oxobutanoate + NADH + H(+). It functions in the pathway amino-acid degradation; L-threonine degradation via oxydo-reductase pathway; glycine from L-threonine: step 1/2. Functionally, catalyzes the NAD(+)-dependent oxidation of L-threonine to 2-amino-3-ketobutyrate. The sequence is that of L-threonine 3-dehydrogenase from Cutibacterium acnes (strain DSM 16379 / KPA171202) (Propionibacterium acnes).